The following is a 281-amino-acid chain: MIDTVTDLSRLRGIVADWRRQGLRVALVPTMGNLHAGHFSLVMLARHYADRVVSSVFVNPTQFGPHEDFQRYPRTPEADMRGLENVGCDVLWLPSVETMYPLGTERTVRLFVPCVSDVLEGTFRPGHFEGVCTVVARLFNQVLPDVAVFGKKDYQQLVVIRQMVVDLAFPIEILGGCIVRESDGLAMSSRNQYLSMQQRPQAAEIHRTLIAMRDAVMSGGVHADVEAEAVRRLEAAGFQVDYAVIRLSDLGEPIDGIVISPGIALVAARLGNTRLIDNLEF.

31 to 38 contacts ATP; that stretch reads MGNLHAGH. His-38 (proton donor) is an active-site residue. Gln-62 contacts (R)-pantoate. Residue Gln-62 participates in beta-alanine binding. 150–153 contributes to the ATP binding site; it reads GKKD. Gln-156 is a binding site for (R)-pantoate. Residues Val-179 and 187-190 each bind ATP; that span reads MSSR.

This sequence belongs to the pantothenate synthetase family. In terms of assembly, homodimer.

It is found in the cytoplasm. It carries out the reaction (R)-pantoate + beta-alanine + ATP = (R)-pantothenate + AMP + diphosphate + H(+). It participates in cofactor biosynthesis; (R)-pantothenate biosynthesis; (R)-pantothenate from (R)-pantoate and beta-alanine: step 1/1. Catalyzes the condensation of pantoate with beta-alanine in an ATP-dependent reaction via a pantoyl-adenylate intermediate. In Xylella fastidiosa (strain M12), this protein is Pantothenate synthetase.